The primary structure comprises 206 residues: Ribosomal RNA small subunit methyltransferase G (206 aa).

S-adenosyl-L-methionine contacts are provided by residues Gly-73, Leu-78, 124-125 (VE), and Arg-139.

This sequence belongs to the methyltransferase superfamily. RNA methyltransferase RsmG family.

Its subcellular location is the cytoplasm. It carries out the reaction guanosine(527) in 16S rRNA + S-adenosyl-L-methionine = N(7)-methylguanosine(527) in 16S rRNA + S-adenosyl-L-homocysteine. Specifically methylates the N7 position of guanine in position 527 of 16S rRNA. The polypeptide is Ribosomal RNA small subunit methyltransferase G (Edwardsiella ictaluri (strain 93-146)).